A 485-amino-acid polypeptide reads, in one-letter code: UDP-N-acetylmuramate--L-alanine ligase (485 aa).

Position 120-126 (120-126) interacts with ATP; that stretch reads GSHGKTT.

The protein belongs to the MurCDEF family.

Its subcellular location is the cytoplasm. It carries out the reaction UDP-N-acetyl-alpha-D-muramate + L-alanine + ATP = UDP-N-acetyl-alpha-D-muramoyl-L-alanine + ADP + phosphate + H(+). The protein operates within cell wall biogenesis; peptidoglycan biosynthesis. Functionally, cell wall formation. This is UDP-N-acetylmuramate--L-alanine ligase from Rickettsia massiliae (strain Mtu5).